Here is a 595-residue protein sequence, read N- to C-terminus: E3 ubiquitin-protein ligase synoviolin B (595 aa).

Residues 1–19 traverse the membrane as a helical segment; it reads MTGASLALTASVVAHAYYL. The Lumenal segment spans residues 20–35; it reads KNQFYPTVVYLTKSSP. The chain crosses the membrane as a helical span at residues 36–56; the sequence is SMAILYIQAFVLVFLLGKFMG. Over 57–92 the chain is Cytoplasmic; the sequence is KVFFGQLRAAEMEHLLERSWYAVTETCLAFTVFRDD. The helical transmembrane segment at 93–113 threads the bilayer; it reads FSPRFVALFTLLLFLKCFHWL. Over 114–129 the chain is Lumenal; sequence AEDRVDFMERSPNISW. A helical membrane pass occupies residues 130–150; the sequence is LFHFRILALMLLLGVLDAFFV. Residues 151–163 are Cytoplasmic-facing; the sequence is SHAYNSLVTRGAS. A helical transmembrane segment spans residues 164 to 184; sequence VQLVFGFEYAILMTMILAVFI. The Lumenal portion of the chain corresponds to 185–218; the sequence is KYILHSVDLQSENPWDNKAVYMLYTELFTGFIKV. Residues 219-239 traverse the membrane as a helical segment; sequence LLYMAFMTIMVKVHTFPLFAI. The interaction with p53/TP53 stretch occupies residues 230-264; it reads KVHTFPLFAIRPMYLAMRQFKKAVTDAVMSRRAIR. Residues 240 to 595 lie on the Cytoplasmic side of the membrane; it reads RPMYLAMRQF…LQKLETTDSQ (356 aa). Zn(2+) contacts are provided by cysteine 285, cysteine 288, cysteine 301, histidine 303, histidine 306, cysteine 309, cysteine 320, and cysteine 323. The RING-type; atypical zinc-finger motif lies at 285-324; it reads CIICREEMVSGAKRLPCNHIFHTSCLRSWFQRQQTCPTCR. The segment covering 335–353 has biased composition (low complexity); it reads QPQTPAEQQNQHQAQQQPT. Disordered stretches follow at residues 335 to 370 and 386 to 426; these read QPQT…LPPF and PVPG…PGAA. A compositionally biased stretch (pro residues) spans 354-370; sequence PVVPPQPNFPPGMLPPF. A compositionally biased stretch (low complexity) spans 390–408; sequence APVGNPPDEANPGSSSGSS. Residues 463–494 are a coiled coil; the sequence is EELRAMEGHERQNLEARLQCLQNIHTLLDAAM. Residues 509 to 595 form a disordered region; it reads PPQPPVSSSS…LQKLETTDSQ (87 aa). Over residues 514–552 the composition is skewed to low complexity; the sequence is VSSSSSSSASASTEPTTSSVSEPVIDTSSIVTTDSSQQS.

The protein belongs to the HRD1 family. As to quaternary structure, homodimer.

It is found in the endoplasmic reticulum membrane. It carries out the reaction S-ubiquitinyl-[E2 ubiquitin-conjugating enzyme]-L-cysteine + [acceptor protein]-L-lysine = [E2 ubiquitin-conjugating enzyme]-L-cysteine + N(6)-ubiquitinyl-[acceptor protein]-L-lysine.. The protein operates within protein modification; protein ubiquitination. In terms of biological role, E3 ubiquitin-protein ligase which accepts ubiquitin specifically from endoplasmic reticulum-associated UBC7 E2 ligase and transfers it to substrates, promoting their degradation. Component of the endoplasmic reticulum quality control (ERQC) system also called ER-associated degradation (ERAD) involved in ubiquitin-dependent degradation of misfolded endoplasmic reticulum proteins. Also promotes the degradation of normal but naturally short-lived proteins. Protects cells from ER stress-induced apoptosis. Sequesters p53 in the cytoplasm and promotes its degradation, thereby negatively regulating its biological function in transcription, cell cycle regulation and apoptosis. This chain is E3 ubiquitin-protein ligase synoviolin B (syvn1-b), found in Xenopus laevis (African clawed frog).